A 2019-amino-acid chain; its full sequence is Sodium channel protein type 5 subunit alpha (2019 aa).

At 1–129 (MANFLLPRGT…VRRAAVKILV (129 aa)) the chain is on the cytoplasmic side. A disordered region spans residues 27-66 (RMAEKQARGSATSQESREGLPEEEAPRPQLDLQASKKLPD). Position 36 is a phosphoserine (Ser-36). Position 38 is a phosphothreonine (Thr-38). The segment covering 41 to 52 (ESREGLPEEEAP) has biased composition (basic and acidic residues). Residues 113–420 (VLSPFHPVRR…VVAMAYEEQN (308 aa)) form an I repeat. Residues 130–149 (HSLFSMLIMCTILTNCVFMA) form a helical membrane-spanning segment. Residues 150-157 (QHDPPPWT) lie on the Extracellular side of the membrane. The chain crosses the membrane as a helical span at residues 158–179 (KYVEYTFTAIYTFESLVKILAR). Topologically, residues 180-188 (GFCLHAFTF) are cytoplasmic. A helical transmembrane segment spans residues 189–209 (LRDPWNWLDFSVIVMAYTTEF). Topologically, residues 210 to 216 (VDLGNVS) are extracellular. Asn-214 carries N-linked (GlcNAc...) asparagine glycosylation. A helical transmembrane segment spans residues 217–236 (ALRTFRVLRALKTISVISGL). Over 237–249 (KTIVGALIQSVKK) the chain is Cytoplasmic. The chain crosses the membrane as a helical span at residues 250-272 (LADVMVLTVFCLSVFALIGLQLF). Topologically, residues 273 to 357 (MGNLRHKCVR…PDHGYTSFDS (85 aa)) are extracellular. Cys-280 and Cys-335 are disulfide-bonded. Asn-283, Asn-288, Asn-291, Asn-318, and Asn-328 each carry an N-linked (GlcNAc...) asparagine glycan. The segment at residues 358–378 (FAWAFLALFRLMTQDCWERLY) is an intramembrane region (pore-forming). At 379–386 (QQTLRSAG) the chain is on the extracellular side. Residues 387 to 413 (KIYMIFFMLVIFLGSFYLVNLILAVVA) traverse the membrane as a helical segment. Over 414–719 (MAYEEQNQAT…VKFVVMDPFA (306 aa)) the chain is Cytoplasmic. 4 positions are modified to phosphoserine: Ser-457, Ser-460, Ser-483, and Ser-484. Disordered regions lie at residues 461–575 (LEMS…TQGQ) and 610–647 (EATS…TPQA). Position 486 is a phosphothreonine (Thr-486). A compositionally biased stretch (basic and acidic residues) spans 491–503 (DDRLPKSDSEDGP). Phosphoserine occurs at positions 497 and 510. Residues 507–528 (NQLSLTHGLSRTSMRPRSSRGS) show a composition bias toward polar residues. Arg-526 carries the dimethylated arginine; alternate modification. Omega-N-methylarginine; alternate is present on Arg-526. Phosphoserine is present on residues Ser-539 and Ser-571. A phosphoserine mark is found at Ser-664 and Ser-667. One copy of the II repeat lies at 699 to 971 (CCPLWMSIKQ…QLALARIQRG (273 aa)). A helical membrane pass occupies residues 720–737 (DLTITMCIVLNTLFMALE). At 738–746 (HYNMTAEFE) the chain is on the extracellular side. Asn-740 carries an N-linked (GlcNAc...) asparagine glycan. A helical transmembrane segment spans residues 747 to 769 (EMLQVGNLVFTGIFTAEMTFKII). Topologically, residues 770-775 (ALDPYY) are cytoplasmic. The helical transmembrane segment at 776-796 (YFQQGWNIFDSIIVILSLMEL) threads the bilayer. At 797–806 (GLSRMGNLSV) the chain is on the extracellular side. The N-linked (GlcNAc...) asparagine glycan is linked to Asn-803. A helical membrane pass occupies residues 807–821 (LRSFRLLRVFKLAKS). The Cytoplasmic segment spans residues 822 to 838 (WPTLNTLIKIIGNSVGA). A helical transmembrane segment spans residues 839–860 (LGNLTLVLAIIVFIFAVVGMQL). Residues 861–886 (FGKNYSELRHRISDSGLLPRWHMMDF) are Extracellular-facing. An N-linked (GlcNAc...) asparagine glycan is attached at Asn-864. The segment at residues 887-905 (FHAFLIIFRILCGEWIETM) is an intramembrane region (pore-forming). At 906–914 (WDCMEVSGQ) the chain is on the extracellular side. Residues Cys-908 and Cys-917 are joined by a disulfide bond. A helical transmembrane segment spans residues 915–943 (SLCLLVFLLVMVIGNLVVLNLFLALLLSS). The Cytoplasmic segment spans residues 944-1205 (FSADNLTAPD…LRKTCYRIVE (262 aa)). The disordered stretch occupies residues 1000-1144 (HSQLPSCIAA…EDSYSEGSTA (145 aa)). Residues 1017–1036 (EVEKAPPARKETRFEEDKRP) show a composition bias toward basic and acidic residues. Over residues 1056–1075 (SDTDDQEEDEENSLGTEEEE) the composition is skewed to acidic residues. Residues 1098 to 1115 (SQVSETTSSEAEASTSQA) are compositionally biased toward low complexity. Residues 1189–1503 (PGKVWWRLRK…KKYYNAMKKL (315 aa)) form an III repeat. The chain crosses the membrane as a helical span at residues 1206-1227 (HSWFETFIIFMILLSSGALAFE). The Extracellular portion of the chain corresponds to 1228–1238 (DIYLEERKTIK). Residues 1239 to 1261 (VLLEYADKMFTYVFVLEMLLKWV) form a helical membrane-spanning segment. Residues 1262 to 1270 (AYGFKKYFT) are Cytoplasmic-facing. A helical transmembrane segment spans residues 1271–1293 (NAWCWLDFLIVDVSLVSLVANTL). At 1294-1299 (GFAEMG) the chain is on the extracellular side. Residues 1300 to 1319 (PIKSLRTLRALRPLRALSRF) traverse the membrane as a helical segment. The Cytoplasmic portion of the chain corresponds to 1320–1332 (EGMRVVVNALVGA). The helical transmembrane segment at 1333-1357 (IPSIMNVLLVCLIFWLIFSIMGVNL) threads the bilayer. The Extracellular portion of the chain corresponds to 1358–1402 (FAGKFGRCINQTEGDLPLNYTIVNNKSECESFNVTGELYWTKVKV). N-linked (GlcNAc...) asparagine glycosylation is found at Asn-1367, Asn-1376, Asn-1382, and Asn-1390. The pore-forming intramembrane region spans 1403–1424 (NFDNVGAGYLALLQVATFKGWM). Topologically, residues 1425-1447 (DIMYAAVDSRGYEEQPQWEDNLY) are extracellular. A helical membrane pass occupies residues 1448–1472 (MYIYFVVFIIFGSFFTLNLFIGVII). The Cytoplasmic portion of the chain corresponds to 1473–1530 (DNFNQQKKKLGGQDIFMTEEQKKYYNAMKKLGSKKPQKPIPRPLNKYQGFIFDIVTKQ). Ser-1505 carries the phosphoserine; by PKC modification. An IV repeat occupies 1512-1809 (IPRPLNKYQG…WEKFDPEATQ (298 aa)). A helical transmembrane segment spans residues 1531-1549 (AFDVTIMFLICLNMVTMMV). The Extracellular portion of the chain corresponds to 1550–1560 (ETDDQSPEKVN). A helical transmembrane segment spans residues 1561 to 1582 (ILAKINLLFVAIFTGECIVKMA). The Cytoplasmic portion of the chain corresponds to 1583–1591 (ALRHYYFTN). Residues 1592 to 1614 (SWNIFDFVVVILSIVGTVLSDII) form a helical membrane-spanning segment. Topologically, residues 1615 to 1621 (QKYFFSP) are extracellular. A helical membrane pass occupies residues 1622–1642 (TLFRVIRLARIGRILRLIRGA). Residues 1643–1652 (KGIRTLLFAL) lie on the Cytoplasmic side of the membrane. Residues 1653-1681 (MMSLPALFNIGLLLFLVMFIYSIFGMANF) form a helical membrane-spanning segment. The Extracellular segment spans residues 1682 to 1699 (AYVKWEAGIDDMFNFQTF). Residues 1700-1716 (ANSMLCLFQITTSAGWD) constitute an intramembrane region (pore-forming). The Extracellular portion of the chain corresponds to 1717 to 1747 (GLLSPILNTGPPYCDPNLPNSNGSRGNCGSP). The helical transmembrane segment at 1748–1773 (AVGILFFTTYIIISFLIVVNMYIAII) threads the bilayer. Over 1774–2019 (LENFSVATEE…SPDRDRESIV (246 aa)) the chain is Cytoplasmic. Residues 1841–1903 (DLPMVSGDRI…ITTTLRRKHE (63 aa)) are interaction with FGF13. Residues 1903-1932 (EEVSATVIQRAFRRHLLQRSVKHASFLFRQ) form the IQ domain. The span at 1963–1982 (SGPLSSSSISSTSFPPSYDS) shows a compositional bias: low complexity. The interval 1963–2019 (SGPLSSSSISSTSFPPSYDSVTRATSDNLPVRASDYSRSEDLADFPPSPDRDRESIV) is disordered. Residues 1977 to 1980 (PPSY) are interaction with NEDD4, NEDD4L and WWP2.

The protein belongs to the sodium channel (TC 1.A.1.10) family. Nav1.5/SCN5A subfamily. As to quaternary structure, cannot form the same regulatory interactions with beta subunits as other Navs do. Interacts with the PDZ domain of the syntrophin SNTA1, SNTB1 and SNTB2. Interacts with NEDD4, NEDD4L, WWP2 and GPD1L. Interacts with CALM. Interacts with FGF13; the interaction is direct and may regulate SNC5A density at membranes and function. Interacts with FGF12 and FGF14. Interacts with ANK3. Interacts with PKP2 (via N-terminus). Interacts with TMEM233. Interacts with XIRP2; the interaction is required for normal action potential configuration in the heart. Phosphorylation at Ser-1505 by PKC in a highly conserved cytoplasmic loop slows inactivation of the sodium channel and reduces peak sodium currents. Regulated through phosphorylation by CaMK2D. Post-translationally, ubiquitinated by NEDD4L; which promotes its endocytosis. Does not seem to be ubiquitinated by NEDD4 or WWP2. In terms of processing, lacks the cysteine which covalently binds the conotoxin GVIIJ. This cysteine (position 868) is speculated in other sodium channel subunits alpha to be implied in covalent binding with the sodium channel subunit beta-2 or beta-4. N-glycosylated at Asn-318, probably hinders potential interaction with regulatory subunits. In terms of tissue distribution, expressed in the myocardium (at protein level).

It localises to the cell membrane. It is found in the cytoplasm. The protein localises to the perinuclear region. Its subcellular location is the sarcolemma. The protein resides in the T-tubule. It localises to the cell junction. The enzyme catalyses Na(+)(in) = Na(+)(out). Channel inactivation is regulated by intracellular calcium levels. It is a tetrodotoxin-resistant voltage-gated Na(+) channel (Nav). Its function is as follows. Pore-forming subunit of Nav1.5, a voltage-gated sodium (Nav) channel that directly mediates the depolarizing phase of action potentials in excitable membranes. Navs, also called VGSCs (voltage-gated sodium channels) or VDSCs (voltage-dependent sodium channels), operate by switching between closed and open conformations depending on the voltage difference across the membrane. In the open conformation they allow Na(+) ions to selectively pass through the pore, along their electrochemical gradient. The influx of Na(+) ions provokes membrane depolarization, initiating the propagation of electrical signals throughout cells and tissues. Nav1.5 is the predominant sodium channel expressed in myocardial cells and it is responsible for the initial upstroke of the action potential in cardiac myocytes, thereby initiating the heartbeat. Required for normal electrical conduction including formation of the infranodal ventricular conduction system and normal action potential configuration, as a result of its interaction with XIRP2. This chain is Sodium channel protein type 5 subunit alpha, found in Mus musculus (Mouse).